The following is a 964-amino-acid chain: Activator of stress genes 1 (964 aa).

The zn(2)-C6 fungal-type DNA-binding region spans 21-47; the sequence is CDECRKKKVKCDGQQPCIHCTVYSYEC. Residues 104 to 125 form a disordered region; sequence ASTIPASNNPSKPRKYKTKSTR. Serine 166 bears the Phosphoserine; by ATM or ATR mark. Serine 186 bears the Phosphoserine mark. 3 stretches are compositionally biased toward polar residues: residues 190-201, 209-225, and 733-759; these read PVLSSNSKNSTP, KSDS…DSVD, and NNTP…TNMS. Disordered stretches follow at residues 190-225, 733-764, and 800-900; these read PVLS…DSVD, NNTP…ERDP, and NSAF…SPSY. The segment covering 800–896 has biased composition (low complexity); it reads NSAFDFSSSK…NDFGIKIDNN (97 aa). Phosphoserine is present on serine 963.

It belongs to the ASG1 family.

The protein localises to the nucleus. Probable transcription factor involved in the stress response. In Saccharomyces cerevisiae (strain ATCC 204508 / S288c) (Baker's yeast), this protein is Activator of stress genes 1 (ASG1).